The chain runs to 217 residues: Protein-L-isoaspartate O-methyltransferase (217 aa).

Residue serine 64 is part of the active site.

This sequence belongs to the methyltransferase superfamily. L-isoaspartyl/D-aspartyl protein methyltransferase family.

Its subcellular location is the cytoplasm. The catalysed reaction is [protein]-L-isoaspartate + S-adenosyl-L-methionine = [protein]-L-isoaspartate alpha-methyl ester + S-adenosyl-L-homocysteine. In terms of biological role, catalyzes the methyl esterification of L-isoaspartyl residues in peptides and proteins that result from spontaneous decomposition of normal L-aspartyl and L-asparaginyl residues. It plays a role in the repair and/or degradation of damaged proteins. The sequence is that of Protein-L-isoaspartate O-methyltransferase from Rhodopseudomonas palustris (strain BisB5).